The sequence spans 637 residues: Glutamate--cysteine ligase catalytic subunit (637 aa).

M1 is subject to N-acetylmethionine. S5 and S8 each carry phosphoserine.

Belongs to the glutamate--cysteine ligase type 3 family. In terms of assembly, heterodimer of a catalytic heavy chain and a regulatory light chain.

The catalysed reaction is L-cysteine + L-glutamate + ATP = gamma-L-glutamyl-L-cysteine + ADP + phosphate + H(+). The enzyme catalyses (2S)-2-aminobutanoate + L-glutamate + ATP = gamma-L-glutamyl-(2S)-2-aminobutanoate + ADP + phosphate + H(+). Its pathway is sulfur metabolism; glutathione biosynthesis; glutathione from L-cysteine and L-glutamate: step 1/2. With respect to regulation, feedback inhibition by glutathione. Functionally, catalyzes the ATP-dependent ligation of L-glutamate and L-cysteine and participates in the first and rate-limiting step in glutathione biosynthesis. The protein is Glutamate--cysteine ligase catalytic subunit of Homo sapiens (Human).